Here is a 313-residue protein sequence, read N- to C-terminus: Probable cell division protein WhiA (313 aa).

A DNA-binding region (H-T-H motif) is located at residues 277 to 311 (SLKEVAAQVPDGPISKSGVNHRFQKIREIAKQLKE).

This sequence belongs to the WhiA family.

In terms of biological role, involved in cell division and chromosome segregation. This is Probable cell division protein WhiA from Lactobacillus johnsonii (strain CNCM I-12250 / La1 / NCC 533).